The primary structure comprises 193 residues: MLDDEVVWPEDAIEVGRIVDAWGIKGGIKVLPFSSDPQALFSSRRWFLRPPEKPMGPKAAKPLPTLLRITNAREQGDVIVATAQDVADRNAAEALRGCSVFVSRASFPTADVDEYYWIDLIGLAVVNREGQALGNVADLLDTGAHSVLRVTQVETDDQGRSLERERLIPFVAAYIDAVSLEQRCITVDWGLDF.

Positions 112 to 193 constitute a PRC barrel domain; it reads VDEYYWIDLI…CITVDWGLDF (82 aa).

It belongs to the RimM family. In terms of assembly, binds ribosomal protein uS19.

Its subcellular location is the cytoplasm. In terms of biological role, an accessory protein needed during the final step in the assembly of 30S ribosomal subunit, possibly for assembly of the head region. Essential for efficient processing of 16S rRNA. May be needed both before and after RbfA during the maturation of 16S rRNA. It has affinity for free ribosomal 30S subunits but not for 70S ribosomes. In Methylibium petroleiphilum (strain ATCC BAA-1232 / LMG 22953 / PM1), this protein is Ribosome maturation factor RimM.